A 762-amino-acid chain; its full sequence is Anhydrosialidase (762 aa).

The N-terminal stretch at 1 to 27 (MGRIGKKAMAIALVSAVMVTPLNVCAT) is a signal peptide. Residue Arg-293 participates in substrate binding. The Proton acceptor role is filled by Asp-318. BNR repeat units follow at residues 328-339 (AKSTDGGNTWSE), 511-522 (RYSDDEGASWSD), and 571-582 (MYSDDHGDNWTY). Glu-595 is a catalytic residue. Arg-611 provides a ligand contact to substrate. The stretch at 620–631 (VTSIDGGETWSD) is one BNR 4 repeat. A substrate-binding site is contributed by Arg-673. Tyr-713 functions as the Nucleophile in the catalytic mechanism.

It belongs to the glycosyl hydrolase 33 family.

The protein localises to the secreted. It localises to the extracellular space. The catalysed reaction is Elimination of alpha-sialyl groups in N-acetylneuraminic acid glycosides, releasing 2,7-anhydro-alpha-N-acetylneuraminate.. The polypeptide is Anhydrosialidase (Macrobdella decora (North American leech)).